Reading from the N-terminus, the 308-residue chain is Olfactory receptor 2T6 (308 aa).

Residues 1–28 are Extracellular-facing; it reads MNENNETLTRGFTLMGLFTHNKCSGFFF. N-linked (GlcNAc...) asparagine glycosylation occurs at asparagine 5. A helical membrane pass occupies residues 29-49; sequence GVICAVFFMAMIANGVMIFLI. Residues 50–57 lie on the Cytoplasmic side of the membrane; that stretch reads NIDPHLHT. The helical transmembrane segment at 58–78 threads the bilayer; sequence PMYFLLSHLSVIDTLYISTIV. Over 79-98 the chain is Extracellular; that stretch reads PKMLVDYLMGEGTISFIACT. Cysteines 97 and 179 form a disulfide. Residues 99–119 form a helical membrane-spanning segment; it reads AQCFLYMGFMGAEFFLLGLMA. Residues 120 to 145 lie on the Cytoplasmic side of the membrane; it reads YDRYVAICNPLRYPVLISWRVCWMIL. Residues 146–166 form a helical membrane-spanning segment; it reads ASSWFGGALDSFLLTPITMSL. Residues 167-203 lie on the Extracellular side of the membrane; that stretch reads PFCASHQINHFFCEAPTMLRLACGDKTTYETVMYVCC. The chain crosses the membrane as a helical span at residues 204 to 224; the sequence is VAMLLIPFSVVTASYTRILIT. At 225-236 the chain is on the cytoplasmic side; sequence VHQMTSAEGRKK. The chain crosses the membrane as a helical span at residues 237–257; the sequence is AFATCSSHMMVVTLFYGAALY. Residues 258–271 are Extracellular-facing; it reads TYTLPQSYHTPIKD. The helical transmembrane segment at 272–292 threads the bilayer; sequence KVFSAFYTILTPLLNPLIYSL. At 293 to 308 the chain is on the cytoplasmic side; the sequence is RNRDVMGALKRVVARC.

It belongs to the G-protein coupled receptor 1 family.

It localises to the cell membrane. Functionally, odorant receptor. The polypeptide is Olfactory receptor 2T6 (OR2T6) (Homo sapiens (Human)).